Here is a 435-residue protein sequence, read N- to C-terminus: Phosphomethylpyrimidine synthase (435 aa).

Substrate-binding positions include Asn-67, Met-96, Tyr-125, His-163, Ser-185–Gly-187, Asp-226–Arg-229, and Glu-265. His-269 is a binding site for Zn(2+). Tyr-292 lines the substrate pocket. Residue His-333 participates in Zn(2+) binding. The [4Fe-4S] cluster site is built by Cys-408, Cys-411, and Cys-415.

The protein belongs to the ThiC family. [4Fe-4S] cluster is required as a cofactor.

The enzyme catalyses 5-amino-1-(5-phospho-beta-D-ribosyl)imidazole + S-adenosyl-L-methionine = 4-amino-2-methyl-5-(phosphooxymethyl)pyrimidine + CO + 5'-deoxyadenosine + formate + L-methionine + 3 H(+). Its pathway is cofactor biosynthesis; thiamine diphosphate biosynthesis. In terms of biological role, catalyzes the synthesis of the hydroxymethylpyrimidine phosphate (HMP-P) moiety of thiamine from aminoimidazole ribotide (AIR) in a radical S-adenosyl-L-methionine (SAM)-dependent reaction. The sequence is that of Phosphomethylpyrimidine synthase from Thermus thermophilus (strain ATCC 27634 / DSM 579 / HB8).